A 606-amino-acid chain; its full sequence is Thrombospondin-related anonymous protein (606 aa).

A signal peptide spans 1-24 (MKLLGNSKYFFVVLLLCISVFLNG). Residues 43-228 (DLHILLDGSG…TMIKPFLSKV (186 aa)) form the VWFA domain. One can recognise a TSP type-1 domain in the interval 235-281 (VALCGKWEEWSECSTTCDNGTKIRKRKVLHPNCAGEMTAPCKVRDCP). Residues 301–541 (PVEPIEPAEP…SKKQSKSNNG (241 aa)) are disordered. 3 stretches are compositionally biased toward low complexity: residues 409-425 (ENPF…IIAP), 440-450 (ELPNNLPESPS), and 459-479 (PNDN…IPNK). Composition is skewed to basic and acidic residues over residues 487–504 (NPYK…RSND) and 516–532 (DKLE…ENKS). The helical transmembrane segment at 544–564 (IAGGIIGGLAIIGCIGVGYNF) threads the bilayer.

Interacts (via integrin-like A-domain) with Anopheles gambiae saglin/SG1F; the interaction probably promotes sporozoite invasion of salivary gland. Interacts (via integrin-like A-domain) with human AHSG; the interaction promotes sporozoite invasion of hepatocytes and formation of exoerythrocytic forms of parasites in human hepatoma HepG2 cells.

Its subcellular location is the cell membrane. It localises to the cytoplasm. Promotes parasite ability to invade host hepatocytes. Promotes parasite ability to invade mosquito salivary glands. Required for sporozoite gliding motility. The chain is Thrombospondin-related anonymous protein from Plasmodium berghei (strain Anka).